Reading from the N-terminus, the 492-residue chain is Malonate-semialdehyde dehydrogenase (492 aa).

Residues Phe-156, Lys-180, Glu-183, Lys-184, Ser-233, and Thr-255 each coordinate NAD(+). Cys-288 acts as the Nucleophile in catalysis. Glu-387 contributes to the NAD(+) binding site.

This sequence belongs to the aldehyde dehydrogenase family. IolA subfamily. In terms of assembly, homotetramer.

It carries out the reaction 3-oxopropanoate + NAD(+) + CoA + H2O = hydrogencarbonate + acetyl-CoA + NADH + H(+). The catalysed reaction is 2-methyl-3-oxopropanoate + NAD(+) + CoA + H2O = propanoyl-CoA + hydrogencarbonate + NADH + H(+). The protein operates within polyol metabolism; myo-inositol degradation into acetyl-CoA; acetyl-CoA from myo-inositol: step 7/7. Its function is as follows. Catalyzes the oxidation of malonate semialdehyde (MSA) and methylmalonate semialdehyde (MMSA) into acetyl-CoA and propanoyl-CoA, respectively. Is involved in a myo-inositol catabolic pathway. Bicarbonate, and not CO2, is the end-product of the enzymatic reaction. The polypeptide is Malonate-semialdehyde dehydrogenase (Lacticaseibacillus casei (Lactobacillus casei)).